The chain runs to 123 residues: Thioredoxin H-type (123 aa).

Residues 2–119 (AATAELIPAG…IEAKLLKHSQ (118 aa)) enclose the Thioredoxin domain. Residues C45 and C48 are joined by a disulfide bond.

The protein belongs to the thioredoxin family. Plant H-type subfamily.

It localises to the cytoplasm. Functionally, participates in various redox reactions through the reversible oxidation of the active center dithiol to a disulfide. The H form is known to activate a number of cytosolic enzymes. This chain is Thioredoxin H-type (PEC-2), found in Brassica campestris (Field mustard).